The primary structure comprises 255 residues: Protein PH0439 (255 aa).

Belongs to the CinA family.

The sequence is that of Protein PH0439 from Pyrococcus horikoshii (strain ATCC 700860 / DSM 12428 / JCM 9974 / NBRC 100139 / OT-3).